The chain runs to 200 residues: MALLTAETFRLQFNNKRRLRRPYYPRKALLCYQLTPQNGSTPTRGYFENKKKCHAEICFINEIKSMGLDETQCYQVTCYLTWSPCSSCAWELVDFIKAHDHLNLGIFASRLYYHWCKPQQKGLRLLCGSQVPVEVMGFPEFADCWENFVDHEKPLSFNPYKMLEELDKNSRAIKRRLERIKIPGVRAQGRYMDILCDAEV.

Residues 4-126 (LTAETFRLQF…KPQQKGLRLL (123 aa)) form the CMP/dCMP-type deaminase domain. Residue His-54 coordinates Zn(2+). The active-site Proton donor is the Glu-56. Residues Cys-85 and Cys-88 each contribute to the Zn(2+) site. Positions 160–182 (YKMLEELDKNSRAIKRRLERIKI) form a coiled coil.

It belongs to the cytidine and deoxycytidylate deaminase family. In terms of assembly, homodimer. Interacts with AGO1, AGO2 and AGO3. Zn(2+) serves as cofactor. Post-translationally, (Microbial infection) Following infection by some HIV-1 strains, such as isolate BRU/LAI, can be ubiquitinated by a cullin-5-RING E3 ubiquitin-protein ligase complex (ECS complex) hijacked by the HIV-1 Vif protein, leading to its degradation. Ubiquitination by the ECS complex is however less efficent compared to APOBEC3G or APOBEC3G. Expressed in lymphoid organs. Also detected in non-lymphoid tissues including lung, testis, ovary, fetal liver and skin.

It is found in the cytoplasm. The protein localises to the nucleus. It localises to the P-body. The catalysed reaction is a 2'-deoxycytidine in single-stranded DNA + H2O + H(+) = a 2'-deoxyuridine in single-stranded DNA + NH4(+). Its activity is regulated as follows. APOBEC3H activity is regulated by RNA. While RNA-binding inhibits the DNA deaminase activity, double-stranded RNA is required for HIV-1 restriction by promoting APOBEC3H homodimerization and packaging into retroviral nucleocapsids. (Microbial infection) Antiviral activity is inhibited to some extent by the HIV-1 virion infectivity factor (VIF), that prevents its incorporation into progeny virions by both inhibiting its translation and/or by inducing its ubiquitination and subsequent degradation by the 26S proteasome. DNA deaminase (cytidine deaminase) which acts as an inhibitor of retrovirus replication and retrotransposon mobility via deaminase-dependent and -independent mechanisms. The A3H-var/haplotype 2 exhibits antiviral activity against vif-deficient HIV-1. After the penetration of retroviral nucleocapsids into target cells of infection and the initiation of reverse transcription, it can induce the conversion of cytosine to uracil in the minus-sense single-strand viral DNA, leading to G-to-A hypermutations in the subsequent plus-strand viral DNA. The resultant detrimental levels of mutations in the proviral genome, along with a deamination-independent mechanism that works prior to the proviral integration, together exert efficient antiretroviral effects in infected target cells. Selectively targets single-stranded DNA and does not deaminate double-stranded DNA or single- or double-stranded RNA. Exhibits antiviral activity also against T-cell leukemia virus type 1 (HTLV-1) and may inhibit the mobility of LTR and non-LTR retrotransposons. This chain is DNA dC-&gt;dU-editing enzyme APOBEC-3H, found in Homo sapiens (Human).